The sequence spans 117 residues: MAMSNMTYNNVFDHAYEMLKENIRYDDIRDTDDLHDAIHMAADNAVPHYYADIFSVMASEGIDLEFEDSGLMPDTKDVIRILQARIYEQLTIDLWEDAEDLLNEYLEEVEEYEEDEE.

Homodimer. Interacts with HsdM (AC P08957), the M subunit of host type I methyltransferase restriction enzyme M.EcoKI; 1 Ocr dimer binds to M.EcoKI. Interacts with HsdR (AC P08956), the R subunit of host type I bifunctional endonuclease and methyltransferase restriction enzyme R.EcoKI; 2 Ocr dimers binds to R.EcoKI. Interacts with host PglX/BrxX (AC P0DUF9); this interaction inhibits the enzymatic activity of PglX/BrxX through high-affinity binding. Forms a 2:2 tetrameric complex with phage T7 OCR.

In terms of biological role, prevents both degradation and modification of T7 DNA by the host restriction-modification complex. Structural mimic of the phosphate backbone of B-form DNA that binds to and completely occupies the DNA-binding sites of all known families of the complex type I DNA restriction enzymes. Thereby, inhibits the restriction endonuclease activity and protects the phage genome as it penetrates into host cytoplasm. Inhibits host transcription by binding to the bacterial RNAP and competing with sigma factors. Inhibits the host exclusion defense system BREX. This is Protein Ocr from Escherichia phage T7 (Bacteriophage T7).